Here is a 173-residue protein sequence, read N- to C-terminus: dCTP deaminase, dUMP-forming (173 aa).

DCTP contacts are provided by residues 93 to 98 (RSSIGR), D111, 119 to 121 (TLE), and Q138. The active-site Proton donor/acceptor is E121.

It belongs to the dCTP deaminase family. Homotrimer.

The enzyme catalyses dCTP + 2 H2O = dUMP + NH4(+) + diphosphate. The protein operates within pyrimidine metabolism; dUMP biosynthesis; dUMP from dCTP: step 1/1. In terms of biological role, bifunctional enzyme that catalyzes both the deamination of dCTP to dUTP and the hydrolysis of dUTP to dUMP without releasing the toxic dUTP intermediate. This is dCTP deaminase, dUMP-forming from Leptospira interrogans serogroup Icterohaemorrhagiae serovar copenhageni (strain Fiocruz L1-130).